We begin with the raw amino-acid sequence, 790 residues long: Pleckstrin homology domain-containing family G member 6 (790 aa).

The segment at 63 to 91 (SGQARGLSPMRLRDPEPEKRHGGHVGAGL) is disordered. Positions 73–82 (RLRDPEPEKR) are enriched in basic and acidic residues. The DH domain maps to 161–353 (HQQEALWELL…ESFLRHINGQ (193 aa)). One can recognise a PH domain in the interval 409–509 (QLLLEGPVRV…WLEKTQQAQA (101 aa)). Composition is skewed to basic and acidic residues over residues 529–538 (LYRDQDRESP) and 625–635 (ELRDIPLRPHP). 3 disordered regions span residues 529–677 (LYRD…ASER), 690–730 (LRGQ…HTSL), and 748–790 (SQRI…ASEV). Positions 748–762 (SQRIEGAEEPRDSRP) are enriched in basic and acidic residues.

In terms of assembly, interacts with MYH10. Interacts with ELMO1 and EZR (in an open conformation). Interacts with CSPP1. In terms of tissue distribution, highest expression in the placenta. Low levels in small intestine, lung, liver, kidney, thymus and heart.

Its subcellular location is the cell projection. The protein resides in the microvillus. It is found in the cytoplasm. The protein localises to the cytoskeleton. It localises to the spindle. Its subcellular location is the spindle pole. The protein resides in the cleavage furrow. Its function is as follows. Guanine nucleotide exchange factor activating the small GTPase RHOA, which, in turn, induces myosin filament formation. Also activates RHOG. Does not activate RAC1, or to a much lower extent than RHOA and RHOG. Part of a functional unit, involving PLEKHG6, MYH10 and RHOA, at the cleavage furrow to advance furrow ingression during cytokinesis. In epithelial cells, required for the formation of microvilli and membrane ruffles on the apical pole. Along with EZR, required for normal macropinocytosis. The polypeptide is Pleckstrin homology domain-containing family G member 6 (PLEKHG6) (Homo sapiens (Human)).